Reading from the N-terminus, the 260-residue chain is 3'-5' ssDNA/RNA exonuclease TatD (260 aa).

3 residues coordinate a divalent metal cation: glutamate 91, histidine 127, and histidine 152.

This sequence belongs to the metallo-dependent hydrolases superfamily. TatD-type hydrolase family. TatD subfamily. As to quaternary structure, monomer. Mg(2+) is required as a cofactor. Requires Mn(2+) as cofactor.

The protein localises to the cytoplasm. Its function is as follows. 3'-5' exonuclease that prefers single-stranded DNA and RNA. May play a role in the H(2)O(2)-induced DNA damage repair. The polypeptide is 3'-5' ssDNA/RNA exonuclease TatD (Escherichia coli (strain K12)).